The sequence spans 307 residues: Ribosomal RNA small subunit methyltransferase H (307 aa).

S-adenosyl-L-methionine contacts are provided by residues 32–34, D51, I82, D99, and Q106; that span reads AGH.

It belongs to the methyltransferase superfamily. RsmH family.

Its subcellular location is the cytoplasm. It carries out the reaction cytidine(1402) in 16S rRNA + S-adenosyl-L-methionine = N(4)-methylcytidine(1402) in 16S rRNA + S-adenosyl-L-homocysteine + H(+). In terms of biological role, specifically methylates the N4 position of cytidine in position 1402 (C1402) of 16S rRNA. The polypeptide is Ribosomal RNA small subunit methyltransferase H (Campylobacter concisus (strain 13826)).